The chain runs to 257 residues: Dihydroorotate dehydrogenase B (NAD(+)), electron transfer subunit (257 aa).

An FAD-binding FR-type domain is found at 2–102 (MKQEQMTVVR…LGPLGNGFPL (101 aa)). FAD-binding positions include 53 to 56 (RPLS), 70 to 72 (IYR), and 77 to 78 (GT). [2Fe-2S] cluster is bound by residues Cys-221, Cys-226, Cys-229, and Cys-244.

This sequence belongs to the PyrK family. As to quaternary structure, heterotetramer of 2 PyrK and 2 PyrD type B subunits. The cofactor is [2Fe-2S] cluster. Requires FAD as cofactor.

Its pathway is pyrimidine metabolism; UMP biosynthesis via de novo pathway; orotate from (S)-dihydroorotate (NAD(+) route): step 1/1. Responsible for channeling the electrons from the oxidation of dihydroorotate from the FMN redox center in the PyrD type B subunit to the ultimate electron acceptor NAD(+). The protein is Dihydroorotate dehydrogenase B (NAD(+)), electron transfer subunit of Geobacillus sp. (strain WCH70).